Here is a 689-residue protein sequence, read N- to C-terminus: Sodium-dependent phosphate transport protein 2B (689 aa).

The tract at residues 1-41 (MAPWPELGDAQPNPDKYLEGAAGQQPTAPDKSKETNKNNTE) is disordered. The Cytoplasmic segment spans residues 1–100 (MAPWPELGDA…LCVFQGIGRL (100 aa)). The chain crosses the membrane as a helical span at residues 101–121 (ILLLGFLYFFVCSLDILSSAF). The Extracellular segment spans residues 122–135 (QLVGGKMAGQFFSN). A helical transmembrane segment spans residues 136–156 (SSIMSNPLLGLVIGVLVTVLV). Residues 157-212 (QSSSTSTSIVVSMVSSSLLTVRAAIPIIMGANIGTSITNTIVALMQVGDRSEFRRA) lie on the Cytoplasmic side of the membrane. The helical transmembrane segment at 213 to 233 (FAGATVHDFFNWLSVLVLLPV) threads the bilayer. At 234 to 362 (EVATHYLEII…FVNFHLPDLA (129 aa)) the chain is on the extracellular side. N-linked (GlcNAc...) asparagine glycans are attached at residues asparagine 294, asparagine 307, and asparagine 320. A disulfide bridge connects residues cysteine 302 and cysteine 349. The helical transmembrane segment at 363–383 (VGTILLILSLLVLCGCLIMIV) threads the bilayer. Residues 384–407 (KILGSVLKGQVATVIKKTINTDFP) are Cytoplasmic-facing. A helical membrane pass occupies residues 408-428 (FPFAWLTGYLAILVGAGMTFI). The Extracellular portion of the chain corresponds to 429 to 485 (VQSSSVFTSALTPLIGIGVITIERAYPLTLGSNIGTTTTAILAALASPGNALRSSLQ). The chain crosses the membrane as a helical span at residues 486–506 (IALCHFFFNISGILLWYPIPF). Residues 507 to 525 (TRLPIRMAKGLGNISAKYR) lie on the Cytoplasmic side of the membrane. The chain crosses the membrane as a helical span at residues 526-546 (WFAVFYLIIFFFLIPLTVFGL). Over 547–552 (SLAGWR) the chain is Extracellular. Residues 553–573 (VLVGVGVPVVFIIILVLCLRL) traverse the membrane as a helical segment. Residues 574-687 (LQSRCPRVLP…PASDSKTECT (114 aa)) lie on the Cytoplasmic side of the membrane.

Belongs to the SLC34A transporter family.

It is found in the apical cell membrane. It carries out the reaction 3 Na(+)(out) + phosphate(out) = 3 Na(+)(in) + phosphate(in). Functionally, involved in actively transporting phosphate into cells via Na(+) cotransport. The protein is Sodium-dependent phosphate transport protein 2B (SLC34A2) of Pongo abelii (Sumatran orangutan).